Here is a 313-residue protein sequence, read N- to C-terminus: Probable GTP 3',8-cyclase (313 aa).

Residues 4–224 (RFGRSIEDLR…EIRSKHYRPR (221 aa)) enclose the Radical SAM core domain. Arg-13 is a GTP binding site. Cys-20, Cys-24, and Cys-27 together coordinate [4Fe-4S] cluster. Residue Lys-60 coordinates GTP. Residue Gly-64 coordinates S-adenosyl-L-methionine. A GTP-binding site is contributed by Thr-90. Ser-114 contacts S-adenosyl-L-methionine. Lys-151 is a GTP binding site. Cys-244 and Cys-247 together coordinate [4Fe-4S] cluster. 249–251 (RIR) contacts GTP. [4Fe-4S] cluster is bound at residue Cys-261.

Belongs to the radical SAM superfamily. MoaA family. [4Fe-4S] cluster serves as cofactor.

The catalysed reaction is GTP + AH2 + S-adenosyl-L-methionine = (8S)-3',8-cyclo-7,8-dihydroguanosine 5'-triphosphate + 5'-deoxyadenosine + L-methionine + A + H(+). The protein operates within cofactor biosynthesis; molybdopterin biosynthesis. Functionally, catalyzes the cyclization of GTP to (8S)-3',8-cyclo-7,8-dihydroguanosine 5'-triphosphate. The sequence is that of Probable GTP 3',8-cyclase from Sulfurisphaera tokodaii (strain DSM 16993 / JCM 10545 / NBRC 100140 / 7) (Sulfolobus tokodaii).